We begin with the raw amino-acid sequence, 176 residues long: Ribosome maturation factor RimM (176 aa).

Residues 97–176 (EDEFYWRDLI…QILVDWDPDF (80 aa)) form the PRC barrel domain.

This sequence belongs to the RimM family. Binds ribosomal protein uS19.

The protein resides in the cytoplasm. An accessory protein needed during the final step in the assembly of 30S ribosomal subunit, possibly for assembly of the head region. Essential for efficient processing of 16S rRNA. May be needed both before and after RbfA during the maturation of 16S rRNA. It has affinity for free ribosomal 30S subunits but not for 70S ribosomes. The sequence is that of Ribosome maturation factor RimM from Shewanella oneidensis (strain ATCC 700550 / JCM 31522 / CIP 106686 / LMG 19005 / NCIMB 14063 / MR-1).